Here is a 484-residue protein sequence, read N- to C-terminus: tRNA sulfurtransferase (484 aa).

Positions 63–167 (QAFGERLACI…GDKLYMVTKR (105 aa)) constitute a THUMP domain. ATP is bound by residues 185–186 (LI), Lys267, Gly289, and Gln298. A disulfide bridge connects residues Cys346 and Cys458. The region spanning 406–484 (IDTNEVVIDI…GYHNVKVYRP (79 aa)) is the Rhodanese domain. Catalysis depends on Cys458, which acts as the Cysteine persulfide intermediate.

It belongs to the ThiI family.

It is found in the cytoplasm. It catalyses the reaction [ThiI sulfur-carrier protein]-S-sulfanyl-L-cysteine + a uridine in tRNA + 2 reduced [2Fe-2S]-[ferredoxin] + ATP + H(+) = [ThiI sulfur-carrier protein]-L-cysteine + a 4-thiouridine in tRNA + 2 oxidized [2Fe-2S]-[ferredoxin] + AMP + diphosphate. The enzyme catalyses [ThiS sulfur-carrier protein]-C-terminal Gly-Gly-AMP + S-sulfanyl-L-cysteinyl-[cysteine desulfurase] + AH2 = [ThiS sulfur-carrier protein]-C-terminal-Gly-aminoethanethioate + L-cysteinyl-[cysteine desulfurase] + A + AMP + 2 H(+). The protein operates within cofactor biosynthesis; thiamine diphosphate biosynthesis. Its function is as follows. Catalyzes the ATP-dependent transfer of a sulfur to tRNA to produce 4-thiouridine in position 8 of tRNAs, which functions as a near-UV photosensor. Also catalyzes the transfer of sulfur to the sulfur carrier protein ThiS, forming ThiS-thiocarboxylate. This is a step in the synthesis of thiazole, in the thiamine biosynthesis pathway. The sulfur is donated as persulfide by IscS. This chain is tRNA sulfurtransferase, found in Shewanella sp. (strain ANA-3).